The sequence spans 436 residues: Adenylosuccinate synthetase (436 aa).

GTP is bound by residues 13 to 19 (GDEGKGK) and 41 to 43 (GHT). Residue Asp14 is the Proton acceptor of the active site. Residues Asp14 and Gly41 each contribute to the Mg(2+) site. IMP is bound by residues 14-17 (DEGK), 39-42 (NAGH), Thr131, Arg145, Gln226, Thr241, and Arg309. The active-site Proton donor is His42. Residue 305-311 (TVTGRKR) participates in substrate binding. GTP-binding positions include Arg311, 337–339 (KLD), and 419–421 (STG).

The protein belongs to the adenylosuccinate synthetase family. In terms of assembly, homodimer. The cofactor is Mg(2+).

It localises to the cytoplasm. It carries out the reaction IMP + L-aspartate + GTP = N(6)-(1,2-dicarboxyethyl)-AMP + GDP + phosphate + 2 H(+). It participates in purine metabolism; AMP biosynthesis via de novo pathway; AMP from IMP: step 1/2. In terms of biological role, plays an important role in the de novo pathway of purine nucleotide biosynthesis. Catalyzes the first committed step in the biosynthesis of AMP from IMP. The protein is Adenylosuccinate synthetase of Aromatoleum aromaticum (strain DSM 19018 / LMG 30748 / EbN1) (Azoarcus sp. (strain EbN1)).